The sequence spans 458 residues: Succinate-semialdehyde dehydrogenase [NADP(+)] 1 (458 aa).

Residues 134-135 (WN), 158-161 (KHAS), and 210-211 (GS) each bind NADP(+). E232 serves as the catalytic Proton acceptor. NADP(+) is bound at residue L233. C266 (nucleophile) is an active-site residue. E363 is an NADP(+) binding site.

Belongs to the aldehyde dehydrogenase family.

It carries out the reaction succinate semialdehyde + NADP(+) + H2O = succinate + NADPH + 2 H(+). Its function is as follows. Catalyzes the NADP(+)-dependent oxidation of succinate semialdehyde to succinate. It is believed to be the main source of succinate semialdehyde dehydrogenase activity in Mycobacterium. The sequence is that of Succinate-semialdehyde dehydrogenase [NADP(+)] 1 (gabD1) from Mycobacterium ulcerans (strain Agy99).